A 367-amino-acid polypeptide reads, in one-letter code: Chorismate synthase (367 aa).

R48 contacts NADP(+). FMN-binding positions include 125 to 127, G290, 305 to 309, and R333; these read RAS and KPTSS.

This sequence belongs to the chorismate synthase family. In terms of assembly, homotetramer. The cofactor is FMNH2.

The catalysed reaction is 5-O-(1-carboxyvinyl)-3-phosphoshikimate = chorismate + phosphate. The protein operates within metabolic intermediate biosynthesis; chorismate biosynthesis; chorismate from D-erythrose 4-phosphate and phosphoenolpyruvate: step 7/7. Functionally, catalyzes the anti-1,4-elimination of the C-3 phosphate and the C-6 proR hydrogen from 5-enolpyruvylshikimate-3-phosphate (EPSP) to yield chorismate, which is the branch point compound that serves as the starting substrate for the three terminal pathways of aromatic amino acid biosynthesis. This reaction introduces a second double bond into the aromatic ring system. This chain is Chorismate synthase, found in Protochlamydia amoebophila (strain UWE25).